Here is a 70-residue protein sequence, read N- to C-terminus: Small ribosomal subunit protein bS21 (70 aa).

The protein belongs to the bacterial ribosomal protein bS21 family.

The sequence is that of Small ribosomal subunit protein bS21 from Neisseria gonorrhoeae (strain ATCC 700825 / FA 1090).